Consider the following 315-residue polypeptide: Probable HTH-type transcriptional regulator SinR (315 aa).

Residues Arg8–Thr65 form the HTH lysR-type domain. The segment at residues Leu25–Ser44 is a DNA-binding region (H-T-H motif).

This sequence belongs to the LysR transcriptional regulatory family.

Probable regulatory protein. Its target is not known. The sequence is that of Probable HTH-type transcriptional regulator SinR (sinR) from Salmonella typhimurium (strain LT2 / SGSC1412 / ATCC 700720).